A 240-amino-acid polypeptide reads, in one-letter code: MVLSPNQNQKIINPIEESPTVTQELSENIVLTTVDDLYNWAKLSSLWPLLYGTACCFIEFAALIGSRFDFDRFGLVPRSSPRQADLLITAGTITMKYTPTLVRLYEQMPEPKYVIAMGACTITGGMFSMDSPTAVRGVDKLIPVDVYIPGCPPRPEAIIDAVIKLRKKIANDSLQERGQLQQTHRYYCVKHNMKVVEPILTGQYLQTSDRKAVPKELAEAIGMPVSPALQAIPKEEVSLG.

Residues Cys-55, Cys-56, Cys-120, and Cys-151 each coordinate [4Fe-4S] cluster.

Belongs to the complex I 20 kDa subunit family. NDH-1 can be composed of about 15 different subunits; different subcomplexes with different compositions have been identified which probably have different functions. The cofactor is [4Fe-4S] cluster.

The protein localises to the cellular thylakoid membrane. It carries out the reaction a plastoquinone + NADH + (n+1) H(+)(in) = a plastoquinol + NAD(+) + n H(+)(out). The enzyme catalyses a plastoquinone + NADPH + (n+1) H(+)(in) = a plastoquinol + NADP(+) + n H(+)(out). Its function is as follows. NDH-1 shuttles electrons from an unknown electron donor, via FMN and iron-sulfur (Fe-S) centers, to quinones in the respiratory and/or the photosynthetic chain. The immediate electron acceptor for the enzyme in this species is believed to be plastoquinone. Couples the redox reaction to proton translocation, and thus conserves the redox energy in a proton gradient. Cyanobacterial NDH-1 also plays a role in inorganic carbon-concentration. This Trichodesmium erythraeum (strain IMS101) protein is NAD(P)H-quinone oxidoreductase subunit K.